The primary structure comprises 729 residues: Fatty acid oxidation complex subunit alpha (729 aa).

An enoyl-CoA hydratase/isomerase region spans residues 1–189 (MLYKGDTLYL…KIGLVDGVVK (189 aa)). Asp-296 lines the substrate pocket. Residues 311-729 (ETPKQAAVLG…ARPVGSLKTA (419 aa)) are 3-hydroxyacyl-CoA dehydrogenase. NAD(+)-binding positions include Met-324, Asp-343, 400–402 (VVE), Lys-407, and Ser-429. His-450 serves as the catalytic For 3-hydroxyacyl-CoA dehydrogenase activity. Asn-453 provides a ligand contact to NAD(+). Substrate is bound by residues Asn-500 and Tyr-660. The disordered stretch occupies residues 708–729 (RHNEPYYPPVEPARPVGSLKTA).

This sequence in the N-terminal section; belongs to the enoyl-CoA hydratase/isomerase family. The protein in the C-terminal section; belongs to the 3-hydroxyacyl-CoA dehydrogenase family. Heterotetramer of two alpha chains (FadB) and two beta chains (FadA).

The catalysed reaction is a (3S)-3-hydroxyacyl-CoA + NAD(+) = a 3-oxoacyl-CoA + NADH + H(+). It catalyses the reaction a (3S)-3-hydroxyacyl-CoA = a (2E)-enoyl-CoA + H2O. The enzyme catalyses a 4-saturated-(3S)-3-hydroxyacyl-CoA = a (3E)-enoyl-CoA + H2O. It carries out the reaction (3S)-3-hydroxybutanoyl-CoA = (3R)-3-hydroxybutanoyl-CoA. The catalysed reaction is a (3Z)-enoyl-CoA = a 4-saturated (2E)-enoyl-CoA. It catalyses the reaction a (3E)-enoyl-CoA = a 4-saturated (2E)-enoyl-CoA. The protein operates within lipid metabolism; fatty acid beta-oxidation. Its function is as follows. Involved in the aerobic and anaerobic degradation of long-chain fatty acids via beta-oxidation cycle. Catalyzes the formation of 3-oxoacyl-CoA from enoyl-CoA via L-3-hydroxyacyl-CoA. It can also use D-3-hydroxyacyl-CoA and cis-3-enoyl-CoA as substrate. The protein is Fatty acid oxidation complex subunit alpha of Salmonella newport (strain SL254).